The chain runs to 778 residues: DISP complex protein LRCH3 (778 aa).

LRR repeat units lie at residues 56-79 (AAVT…AANH), 81-104 (LTDT…ACHF), 105-127 (VSLE…VLNL), 128-150 (QALT…LCNL), 152-172 (LKVL…IGHL), 173-195 (RHLT…IGNL), 197-218 (ALRD…LAEV), 220-239 (LIRL…CYRN), 240-264 (LRHL…CIKG), and 266-290 (IHIF…ERRP). The interval 56–290 (AAVTGVLSLS…PDLPDYERRP (235 aa)) is mediates interaction with DOCK7. Residues serine 324, serine 415, and serine 419 each carry the phosphoserine modification. The tract at residues 382–642 (TTEEEENDVK…PATDPTDAIT (261 aa)) is mediates direct interaction with MYO6. Residues 511-536 (QKASHNPQRQQPPGNGECSFPSRRSQ) form a disordered region. A compositionally biased stretch (polar residues) spans 514–523 (SHNPQRQQPP). Phosphoserine occurs at positions 608 and 625. Positions 645 to 758 (REEELKLIDQ…VTVQALLELA (114 aa)) constitute a Calponin-homology (CH) domain. Residues 758–778 (APPKQPPPQQPQQQQPQLSAV) are disordered. A compositionally biased stretch (low complexity) spans 768–778 (PQQQQPQLSAV).

As to quaternary structure, component of the DOCK7-induced septin displacement/DISP complex, at least composed of DOCK7, LRCH3 and MYO6.

Its subcellular location is the cytoplasm. As part of the DISP complex, may regulate the association of septins with actin and thereby regulate the actin cytoskeleton. The protein is DISP complex protein LRCH3 of Mus musculus (Mouse).